We begin with the raw amino-acid sequence, 207 residues long: dTTP/UTP pyrophosphatase (207 aa).

The active-site Proton acceptor is aspartate 79.

The protein belongs to the Maf family. YhdE subfamily. A divalent metal cation is required as a cofactor.

The protein localises to the cytoplasm. The catalysed reaction is dTTP + H2O = dTMP + diphosphate + H(+). The enzyme catalyses UTP + H2O = UMP + diphosphate + H(+). Functionally, nucleoside triphosphate pyrophosphatase that hydrolyzes dTTP and UTP. May have a dual role in cell division arrest and in preventing the incorporation of modified nucleotides into cellular nucleic acids. The polypeptide is dTTP/UTP pyrophosphatase (Rhodopseudomonas palustris (strain BisB18)).